The chain runs to 610 residues: Ubiquilin-like protein (610 aa).

Residues 31–105 enclose the Ubiquitin-like domain; that stretch reads IRVIVKTPGN…IHVVIKSKHG (75 aa). Residues 562 to 607 enclose the UBA domain; sequence QAPEVRFSKEMECLQAMGFVNYNANLQALIATDGDTNAAIYKLKSS.

In Mus musculus (Mouse), this protein is Ubiquilin-like protein (Ubqlnl).